Reading from the N-terminus, the 507-residue chain is ATP synthase subunit alpha, chloroplastic (507 aa).

170 to 177 (GDRQTGKT) contributes to the ATP binding site. The residue at position 257 (Thr-257) is a Phosphothreonine.

It belongs to the ATPase alpha/beta chains family. F-type ATPases have 2 components, CF(1) - the catalytic core - and CF(0) - the membrane proton channel. CF(1) has five subunits: alpha(3), beta(3), gamma(1), delta(1), epsilon(1). CF(0) has four main subunits: a, b, b' and c.

It is found in the plastid. The protein localises to the chloroplast thylakoid membrane. The catalysed reaction is ATP + H2O + 4 H(+)(in) = ADP + phosphate + 5 H(+)(out). Functionally, produces ATP from ADP in the presence of a proton gradient across the membrane. The alpha chain is a regulatory subunit. The sequence is that of ATP synthase subunit alpha, chloroplastic from Lepidium virginicum (Virginia pepperweed).